Here is a 476-residue protein sequence, read N- to C-terminus: Aspartyl/glutamyl-tRNA(Asn/Gln) amidotransferase subunit B (476 aa).

The protein belongs to the GatB/GatE family. GatB subfamily. Heterotrimer of A, B and C subunits.

It carries out the reaction L-glutamyl-tRNA(Gln) + L-glutamine + ATP + H2O = L-glutaminyl-tRNA(Gln) + L-glutamate + ADP + phosphate + H(+). The catalysed reaction is L-aspartyl-tRNA(Asn) + L-glutamine + ATP + H2O = L-asparaginyl-tRNA(Asn) + L-glutamate + ADP + phosphate + 2 H(+). Functionally, allows the formation of correctly charged Asn-tRNA(Asn) or Gln-tRNA(Gln) through the transamidation of misacylated Asp-tRNA(Asn) or Glu-tRNA(Gln) in organisms which lack either or both of asparaginyl-tRNA or glutaminyl-tRNA synthetases. The reaction takes place in the presence of glutamine and ATP through an activated phospho-Asp-tRNA(Asn) or phospho-Glu-tRNA(Gln). This is Aspartyl/glutamyl-tRNA(Asn/Gln) amidotransferase subunit B from Albidiferax ferrireducens (strain ATCC BAA-621 / DSM 15236 / T118) (Rhodoferax ferrireducens).